Consider the following 124-residue polypeptide: Phosphoribosyl-AMP cyclohydrolase (124 aa).

Asp82 is a binding site for Mg(2+). Cys83 serves as a coordination point for Zn(2+). Asp84 and Asp86 together coordinate Mg(2+). The Zn(2+) site is built by Cys99 and Cys106.

This sequence belongs to the PRA-CH family. Homodimer. It depends on Mg(2+) as a cofactor. The cofactor is Zn(2+).

The protein resides in the cytoplasm. It catalyses the reaction 1-(5-phospho-beta-D-ribosyl)-5'-AMP + H2O = 1-(5-phospho-beta-D-ribosyl)-5-[(5-phospho-beta-D-ribosylamino)methylideneamino]imidazole-4-carboxamide. It participates in amino-acid biosynthesis; L-histidine biosynthesis; L-histidine from 5-phospho-alpha-D-ribose 1-diphosphate: step 3/9. Its function is as follows. Catalyzes the hydrolysis of the adenine ring of phosphoribosyl-AMP. The polypeptide is Phosphoribosyl-AMP cyclohydrolase (Zymomonas mobilis subsp. mobilis (strain ATCC 31821 / ZM4 / CP4)).